The sequence spans 528 residues: GMP synthase [glutamine-hydrolyzing] (528 aa).

Positions 13 to 204 constitute a Glutamine amidotransferase type-1 domain; that stretch reads AIVILDFGSQ…VYHICGCEPD (192 aa). Cys-90 (nucleophile) is an active-site residue. Residues His-178 and Glu-180 contribute to the active site. The 199-residue stretch at 205-403 folds into the GMPS ATP-PPase domain; it reads WTTEAFIDEA…LGLPEEIVSR (199 aa). 232 to 238 contributes to the ATP binding site; it reads SGGVDSS.

Homodimer.

It carries out the reaction XMP + L-glutamine + ATP + H2O = GMP + L-glutamate + AMP + diphosphate + 2 H(+). It participates in purine metabolism; GMP biosynthesis; GMP from XMP (L-Gln route): step 1/1. Its function is as follows. Catalyzes the synthesis of GMP from XMP. The polypeptide is GMP synthase [glutamine-hydrolyzing] (Synechococcus sp. (strain CC9311)).